Here is a 364-residue protein sequence, read N- to C-terminus: Putative transport protein BUsg_115 (364 aa).

A run of 9 helical transmembrane segments spans residues 18 to 38, 40 to 60, 65 to 85, 161 to 181, 215 to 235, 243 to 263, 280 to 300, 309 to 329, and 331 to 351; these read IFIIAISATSFLIIQPFILGF, WASMIVIATWPLMLKMQKFLG, VAVIGMIIILLLLFIIPIVFL, GLFIMHLTLMLLFSLLLYWNG, ALGVVVTALIQAVLSGIGLLI, LLMILIVFSCLIQLGPLPILI, LLLIWSCFVFILDNILRPFFI, FLILLGVIGGLLAFGMIGLFI, and PVVLVILYRLIVSWIYGISIA.

Belongs to the autoinducer-2 exporter (AI-2E) (TC 2.A.86) family.

The protein localises to the cell membrane. This chain is Putative transport protein BUsg_115, found in Buchnera aphidicola subsp. Schizaphis graminum (strain Sg).